The following is a 156-amino-acid chain: Crossover junction endodeoxyribonuclease RuvC (156 aa).

Active-site residues include Asp-9, Glu-69, and Asp-141. Mg(2+) is bound by residues Asp-9, Glu-69, and Asp-141.

The protein belongs to the RuvC family. Homodimer which binds Holliday junction (HJ) DNA. The HJ becomes 2-fold symmetrical on binding to RuvC with unstacked arms; it has a different conformation from HJ DNA in complex with RuvA. In the full resolvosome a probable DNA-RuvA(4)-RuvB(12)-RuvC(2) complex forms which resolves the HJ. The cofactor is Mg(2+).

The protein resides in the cytoplasm. It carries out the reaction Endonucleolytic cleavage at a junction such as a reciprocal single-stranded crossover between two homologous DNA duplexes (Holliday junction).. In terms of biological role, the RuvA-RuvB-RuvC complex processes Holliday junction (HJ) DNA during genetic recombination and DNA repair. Endonuclease that resolves HJ intermediates. Cleaves cruciform DNA by making single-stranded nicks across the HJ at symmetrical positions within the homologous arms, yielding a 5'-phosphate and a 3'-hydroxyl group; requires a central core of homology in the junction. The consensus cleavage sequence is 5'-(A/T)TT(C/G)-3'. Cleavage occurs on the 3'-side of the TT dinucleotide at the point of strand exchange. HJ branch migration catalyzed by RuvA-RuvB allows RuvC to scan DNA until it finds its consensus sequence, where it cleaves and resolves the cruciform DNA. This is Crossover junction endodeoxyribonuclease RuvC from Acaryochloris marina (strain MBIC 11017).